Consider the following 105-residue polypeptide: Large ribosomal subunit protein bL21 (105 aa).

It belongs to the bacterial ribosomal protein bL21 family. Part of the 50S ribosomal subunit. Contacts protein L20.

Functionally, this protein binds to 23S rRNA in the presence of protein L20. The protein is Large ribosomal subunit protein bL21 of Bacteroides fragilis (strain YCH46).